A 370-amino-acid chain; its full sequence is Prolactin-releasing peptide receptor (370 aa).

Over Met-1–Leu-62 the chain is Extracellular. 2 N-linked (GlcNAc...) asparagine glycosylation sites follow: Asn-27 and Asn-36. A helical membrane pass occupies residues Ile-63–Leu-83. At Val-84 to Asn-101 the chain is on the cytoplasmic side. The chain crosses the membrane as a helical span at residues Leu-102–Phe-122. At Glu-123 to Gly-126 the chain is on the extracellular side. Residues Trp-127–Val-147 traverse the membrane as a helical segment. A disulfide bridge links Cys-134 with Cys-211. Residues Ser-148–Leu-175 lie on the Cytoplasmic side of the membrane. A helical transmembrane segment spans residues Ser-176 to Val-196. Residues His-197–Tyr-225 lie on the Extracellular side of the membrane. Residues Ala-226 to Val-246 form a helical membrane-spanning segment. Residues Arg-247–Thr-276 lie on the Cytoplasmic side of the membrane. A helical membrane pass occupies residues Phe-277–Phe-297. Residues Asn-298–Gln-317 are Extracellular-facing. The chain crosses the membrane as a helical span at residues Leu-318 to Leu-338. At His-339 to Val-369 the chain is on the cytoplasmic side. The required for interaction with GRIP1, GRIP2 and PICK1 stretch occupies residues Thr-365–Ile-370.

The protein belongs to the G-protein coupled receptor 1 family. Interacts through its C-terminal region with the PDZ domain-containing proteins GRIP1, GRIP2 and PICK1. Interacts with PDZ domains 4 and 5 of GRIP1 and with the PDZ domain of PICK1. As to expression, only detected in the pituitary gland and in all cell types of pituitary adenomas.

It localises to the cell membrane. Its function is as follows. Receptor for prolactin-releasing peptide (PrRP). Implicated in lactation, regulation of food intake and pain-signal processing. This Homo sapiens (Human) protein is Prolactin-releasing peptide receptor (PRLHR).